Reading from the N-terminus, the 96-residue chain is Sec-independent protein translocase protein TatA (96 aa).

A helical membrane pass occupies residues 1 to 21 (MGFSSIWHWIIVLVVVLLLFG). Residues 42-96 (GMADDEDDEAASVSAERRGIEDGKPAQTIYPPQQPQQPQQPPQQPPVHRDDAPRG) are disordered. Residues 56-65 (AERRGIEDGK) show a composition bias toward basic and acidic residues. The segment covering 73 to 86 (PQQPQQPQQPPQQP) has biased composition (pro residues).

This sequence belongs to the TatA/E family. In terms of assembly, the Tat system comprises two distinct complexes: a TatABC complex, containing multiple copies of TatA, TatB and TatC subunits, and a separate TatA complex, containing only TatA subunits. Substrates initially bind to the TatABC complex, which probably triggers association of the separate TatA complex to form the active translocon.

The protein resides in the cell inner membrane. Part of the twin-arginine translocation (Tat) system that transports large folded proteins containing a characteristic twin-arginine motif in their signal peptide across membranes. TatA could form the protein-conducting channel of the Tat system. In Rhodospirillum rubrum (strain ATCC 11170 / ATH 1.1.1 / DSM 467 / LMG 4362 / NCIMB 8255 / S1), this protein is Sec-independent protein translocase protein TatA.